We begin with the raw amino-acid sequence, 1061 residues long: Atrial natriuretic peptide receptor 1 (1061 aa).

An N-terminal signal peptide occupies residues 1–32; it reads MPGPRRPAGSRLRLLLLLLLPPLLLLLRGSHA. The Extracellular segment spans residues 33–473; the sequence is GNLTVAVVLP…CNQDHLSTLE (441 aa). N-linked (GlcNAc...) asparagine glycans are attached at residues asparagine 34 and asparagine 45. Chloride is bound by residues serine 85, glycine 117, and cysteine 118. Disulfide bonds link cysteine 92-cysteine 118 and cysteine 196-cysteine 245. Asparagine 212, asparagine 338, asparagine 379, asparagine 386, and asparagine 427 each carry an N-linked (GlcNAc...) asparagine glycan. Cysteine 455 and cysteine 464 are oxidised to a cystine. Residues 474-494 traverse the membrane as a helical segment; sequence VLALVGSLSLLGILIVSFFIY. At 495–1061 the chain is on the cytoplasmic side; it reads RKMQLEKELA…LGERGSSTRG (567 aa). Serine 519 and serine 529 each carry phosphoserine. One can recognise a Protein kinase domain in the interval 528-805; sequence GSRLTLSGRG…QIRLTLRKFN (278 aa). Threonine 532 is modified (phosphothreonine). Serine 534, serine 538, and serine 542 each carry phosphoserine. Threonine 545 is modified (phosphothreonine). Residues 876-1006 enclose the Guanylate cyclase domain; sequence TIYFSDIVGF…DTVNTASRME (131 aa).

The protein belongs to the adenylyl cyclase class-4/guanylyl cyclase family. As to quaternary structure, homodimer. Post-translationally, phosphorylation of the protein kinase-like domain is required for full activation by ANP.

It is found in the membrane. It carries out the reaction GTP = 3',5'-cyclic GMP + diphosphate. Functionally, receptor for the atrial natriuretic peptide NPPA/ANP and the brain natriuretic peptide NPPB/BNP which are potent vasoactive hormones playing a key role in cardiovascular homeostasis. Plays an essential role in the regulation of endothelial cell senescence and vascular aging. Upon activation by ANP or BNP, stimulates the production of cyclic guanosine monophosphate (cGMP) that promotes vascular tone and volume homeostasis by activation of protein kinase cGMP-dependent 1/PRKG1 and subsequently PRKAA1, thereby controlling blood pressure and maintaining cardiovascular homeostasis. This Homo sapiens (Human) protein is Atrial natriuretic peptide receptor 1.